A 548-amino-acid chain; its full sequence is Chaperonin GroEL (548 aa).

ATP is bound by residues 30 to 33 (TLGP), Lys-51, 87 to 91 (DGTTT), Gly-415, 479 to 481 (NAA), and Asp-495. The tract at residues 524–548 (LPKEDKSSDSNSSPAGGMGGMGGMM) is disordered. Gly residues predominate over residues 539–548 (GGMGGMGGMM).

Belongs to the chaperonin (HSP60) family. Forms a cylinder of 14 subunits composed of two heptameric rings stacked back-to-back. Interacts with the co-chaperonin GroES.

The protein localises to the cytoplasm. The enzyme catalyses ATP + H2O + a folded polypeptide = ADP + phosphate + an unfolded polypeptide.. In terms of biological role, together with its co-chaperonin GroES, plays an essential role in assisting protein folding. The GroEL-GroES system forms a nano-cage that allows encapsulation of the non-native substrate proteins and provides a physical environment optimized to promote and accelerate protein folding. The protein is Chaperonin GroEL of Buchnera aphidicola subsp. Myzus persicae (Myzus persicae primary endosymbiont).